The primary structure comprises 374 residues: 4-galactosyl-N-acetylglucosaminide 3-alpha-L-fucosyltransferase FUT5 (374 aa).

The Cytoplasmic segment spans residues 1 to 15 (MDLLGAAKPQWPWRR). A helical; Signal-anchor for type II membrane protein membrane pass occupies residues 16–34 (CLAGLLFQLLVAVCFFSYL). Over 35 to 374 (RVSRDDATGS…TVRSIAAWFN (340 aa)) the chain is Lumenal. Residues asparagine 60, asparagine 105, asparagine 167, and asparagine 198 are each glycosylated (N-linked (GlcNAc...) asparagine).

Belongs to the glycosyltransferase 10 family.

Its subcellular location is the golgi apparatus. The protein resides in the golgi stack membrane. The catalysed reaction is a beta-D-galactosyl-(1-&gt;3)-N-acetyl-beta-D-glucosaminyl derivative + GDP-beta-L-fucose = a beta-D-galactosyl-(1-&gt;3)-[alpha-L-fucosyl-(1-&gt;4)]-N-acetyl-beta-D-glucosaminyl derivative + GDP + H(+). The enzyme catalyses an N-acetyl-alpha-neuraminyl-(2-&gt;3)-beta-D-galactosyl-(1-&gt;4)-N-acetyl-beta-D-glucosaminyl derivative + GDP-beta-L-fucose = an alpha-Neu5Ac-(2-&gt;3)-beta-D-Gal-(1-&gt;4)-[alpha-L-Fuc-(1-&gt;3)]-beta-D-GlcNAc derivative + GDP + H(+). It carries out the reaction an alpha-Neu5Ac-(2-&gt;3)-beta-D-Gal-(1-&gt;4)-beta-D-GlcNAc-(1-&gt;3)-beta-D-Gal-(1-&gt;4)-[alpha-L-Fuc-(1-&gt;3)]-beta-D-GlcNAc derivative + GDP-beta-L-fucose = an alpha-Neu5Ac-(2-&gt;3)-beta-D-Gal-(1-&gt;4)-[alpha-L-Fuc-(1-&gt;3)]-beta-D-GlcNAc-(1-&gt;3)-beta-D-Gal-(1-&gt;4)-[alpha-L-Fuc-(1-&gt;3)]-beta-D-GlcNAc derivative + GDP + H(+). It catalyses the reaction a beta-D-galactosyl-(1-&gt;4)-N-acetyl-beta-D-glucosaminyl derivative + GDP-beta-L-fucose = a beta-D-galactosyl-(1-&gt;4)-[alpha-L-fucosyl-(1-&gt;3)]-N-acetyl-beta-D-glucosaminyl derivative + GDP + H(+). The catalysed reaction is a neolactoside nLc4Cer + GDP-beta-L-fucose = a neolactoside III(3)-alpha-Fuc-nLc4Cer + GDP + H(+). The enzyme catalyses a neolactoside nLc6Cer + GDP-beta-L-fucose = beta-D-galactosyl-(1-&gt;4)-N-acetyl-beta-D-glucosaminyl-(1-&gt;3)-beta-D-galactosyl-(1-&gt;4)-[alpha-L-fucosyl-(1-&gt;3)]-N-acetyl-beta-D-glucosaminyl-(1-&gt;3)-beta-D-galactosyl-(1-&gt;4)-beta-D-glucosyl-(1&lt;-&gt;1')-ceramide + GDP + H(+). It carries out the reaction a neolactoside nLc6Cer(d18:1(4E)) + GDP-beta-L-fucose = a neolactoside III(3)-alpha-Fuc-nLc6Cer(d18:1(4E)) + GDP + H(+). It catalyses the reaction a neolactoside nLc4Cer(d18:1(4E)) + GDP-beta-L-fucose = a neolactoside III(3)-alpha-Fuc-nLc4Cer(d18:1(4E)) + GDP + H(+). The catalysed reaction is a neolactoside VI(3)-alpha-NeuNAc-nLc6Cer + GDP-beta-L-fucose = a neolactoside VI(3)-alpha-NeuAc,III(3)-alphaFuc-nLc6Cer + GDP + H(+). The enzyme catalyses beta-D-galactosyl-(1-&gt;4)-N-acetyl-D-glucosamine + GDP-beta-L-fucose = beta-D-galactosyl-(1-&gt;4)-[alpha-L-fucosyl-(1-&gt;3)]-N-acetyl-D-glucosamine + GDP + H(+). It carries out the reaction N-acetyl-alpha-neuraminosyl-(2-&gt;3)-beta-D-galactosyl-(1-&gt;4)-N-acetyl-beta-D-glucosamine + GDP-beta-L-fucose = N-acetyl-alpha-neuraminosyl-(2-&gt;3)-beta-D-galactosyl-(1-&gt;4)-[alpha-L-fucosyl-(1-&gt;3)]-N-acetyl-beta-D-glucosamine + GDP + H(+). It catalyses the reaction alpha-L-Fuc-(1-&gt;2)-beta-D-Gal-(1-&gt;4)-D-GlcNAc + GDP-beta-L-fucose = alpha-L-Fuc-(1-&gt;2)-beta-D-Gal-(1-&gt;4)-[alpha-L-Fuc-(1-&gt;3)]-D-GlcNAc + GDP + H(+). The catalysed reaction is an alpha-Neu5Ac-(2-&gt;3)-beta-D-Gal-(1-&gt;3)-D-GlcNAc derivative + GDP-beta-L-fucose = an alpha-Neu5Ac-(2-&gt;3)-beta-D-Gal-(1-&gt;3)-[alpha-L-Fuc-(1-&gt;4)]-beta-D-GlcNAc derivative + GDP + H(+). It participates in protein modification; protein glycosylation. In terms of biological role, catalyzes preferentially the transfer of L-fucose, from a guanosine diphosphate-beta-L-fucose, to the N-acetyl-beta-D-glucosamine (GlcNAc) of an N-acetyllactosamine unit (type 2 chain) of an oligosaccharide, or a glycoprotein- and a glycolipid-linked N-acetyllactosamine unit via an alpha (1,3) linkage and participates in the surface expression of VIM-2, Lewis X/SSEA-1 and sialyl Lewis X antigens. Preferentially transfers fucose to the GlcNAc of an internal N-acetyllactosamine unit of a poly-N-acetyllactosamine chain acceptor substrate. Also catalyzes to a lesser extend the transfer of L-fucose to the GlcNAc of a type 1 (beta-D-galactosyl-(1-&gt;3)-N-acetyl-beta-D-glucosaminyl) or H-type 1 (alpha-L-Fuc-(1-&gt;2)-beta-D-Gal-(1-&gt;3)-D-GlcNAc) chain oligosaccharide via an alpha (1,4) linkage. Preferentially catalyzes sialylated type 2 oligosaccharide acceptors over neutral type 2 or H type 2 (alpha-L-Fuc-(1-&gt;2)-beta-D-Gal-(1-&gt;4)-D-GlcNAc) oligosaccharide acceptors. Lactose-based structures are also acceptor substrates. This is 4-galactosyl-N-acetylglucosaminide 3-alpha-L-fucosyltransferase FUT5 from Hylobates lar (Lar gibbon).